The following is a 417-amino-acid chain: Serine hydroxymethyltransferase (417 aa).

(6S)-5,6,7,8-tetrahydrofolate is bound by residues Leu-120 and 124–126 (GHL). Position 229 is an N6-(pyridoxal phosphate)lysine (Lys-229).

It belongs to the SHMT family. As to quaternary structure, homodimer. Requires pyridoxal 5'-phosphate as cofactor.

It localises to the cytoplasm. The catalysed reaction is (6R)-5,10-methylene-5,6,7,8-tetrahydrofolate + glycine + H2O = (6S)-5,6,7,8-tetrahydrofolate + L-serine. The protein operates within one-carbon metabolism; tetrahydrofolate interconversion. Its pathway is amino-acid biosynthesis; glycine biosynthesis; glycine from L-serine: step 1/1. Its function is as follows. Catalyzes the reversible interconversion of serine and glycine with tetrahydrofolate (THF) serving as the one-carbon carrier. This reaction serves as the major source of one-carbon groups required for the biosynthesis of purines, thymidylate, methionine, and other important biomolecules. Also exhibits THF-independent aldolase activity toward beta-hydroxyamino acids, producing glycine and aldehydes, via a retro-aldol mechanism. This Anaeromyxobacter dehalogenans (strain 2CP-1 / ATCC BAA-258) protein is Serine hydroxymethyltransferase.